The sequence spans 573 residues: DNA ligase (573 aa).

Glutamate 250 is a binding site for ATP. The N6-AMP-lysine intermediate role is filled by lysine 252. Positions 257, 272, 301, 342, 432, and 438 each coordinate ATP.

The protein belongs to the ATP-dependent DNA ligase family. Requires Mg(2+) as cofactor.

It catalyses the reaction ATP + (deoxyribonucleotide)n-3'-hydroxyl + 5'-phospho-(deoxyribonucleotide)m = (deoxyribonucleotide)n+m + AMP + diphosphate.. DNA ligase that seals nicks in double-stranded DNA during DNA replication, DNA recombination and DNA repair. This chain is DNA ligase, found in Methanococcus maripaludis (strain C6 / ATCC BAA-1332).